A 508-amino-acid polypeptide reads, in one-letter code: Steroid 17-alpha-hydroxylase/17,20 lyase (508 aa).

Cysteine 442 is a heme binding site.

The protein belongs to the cytochrome P450 family. It depends on heme as a cofactor.

It is found in the endoplasmic reticulum membrane. The protein resides in the microsome membrane. It catalyses the reaction a C21-steroid + reduced [NADPH--hemoprotein reductase] + O2 = a 17alpha-hydroxy-C21-steroid + oxidized [NADPH--hemoprotein reductase] + H2O + H(+). The catalysed reaction is progesterone + reduced [NADPH--hemoprotein reductase] + O2 = 17alpha-hydroxyprogesterone + oxidized [NADPH--hemoprotein reductase] + H2O + H(+). The enzyme catalyses pregnenolone + reduced [NADPH--hemoprotein reductase] + O2 = 17alpha-hydroxypregnenolone + oxidized [NADPH--hemoprotein reductase] + H2O + H(+). It carries out the reaction 17alpha-hydroxyprogesterone + reduced [NADPH--hemoprotein reductase] + O2 = androst-4-ene-3,17-dione + acetate + oxidized [NADPH--hemoprotein reductase] + H2O + 2 H(+). It catalyses the reaction 17alpha-hydroxyprogesterone + reduced [NADPH--hemoprotein reductase] + O2 = 16alpha,17alpha-dihydroxyprogesterone + oxidized [NADPH--hemoprotein reductase] + H2O + H(+). The catalysed reaction is 16alpha,17alpha-dihydroxyprogesterone + reduced [NADPH--hemoprotein reductase] + O2 = 6beta,16alpha,17alpha-trihydroxyprogesterone + oxidized [NADPH--hemoprotein reductase] + H2O + H(+). The enzyme catalyses 17alpha-hydroxypregnenolone + reduced [NADPH--hemoprotein reductase] + O2 = 3beta-hydroxyandrost-5-en-17-one + acetate + oxidized [NADPH--hemoprotein reductase] + H2O + 2 H(+). It carries out the reaction 16alpha,17alpha-dihydroxypregnenolone + reduced [NADPH--hemoprotein reductase] + O2 = 3beta,16alpha-dihydroxy-androst-5-en-17-one + acetate + oxidized [NADPH--hemoprotein reductase] + H2O + 2 H(+). It catalyses the reaction 3beta-hydroxyandrost-5-en-17-one + reduced [NADPH--hemoprotein reductase] + O2 = 3beta,16alpha-dihydroxy-androst-5-en-17-one + oxidized [NADPH--hemoprotein reductase] + H2O + H(+). The catalysed reaction is androst-4-ene-3,17-dione + reduced [NADPH--hemoprotein reductase] + O2 = 16alpha-hydroxyandrost-4-ene-3,17-dione + oxidized [NADPH--hemoprotein reductase] + H2O + H(+). The protein operates within steroid hormone biosynthesis. It participates in steroid biosynthesis; glucocorticoid biosynthesis. With respect to regulation, regulated predominantly by intracellular cAMP levels. The 17,20-lyase activity is stimulated by cytochrome b5, which acts as an allosteric effector increasing the Vmax of the lyase activity. In terms of biological role, a cytochrome P450 monooxygenase involved in corticoid and androgen biosynthesis. Catalyzes 17-alpha hydroxylation of C21 steroids, which is common for both pathways. A second oxidative step, required only for androgen synthesis, involves an acyl-carbon cleavage. The 17-alpha hydroxy intermediates, as part of adrenal glucocorticoids biosynthesis pathway, are precursors of cortisol. Hydroxylates steroid hormones, pregnenolone and progesterone to form 17-alpha hydroxy metabolites, followed by the cleavage of the C17-C20 bond to form C19 steroids, dehydroepiandrosterone (DHEA) and androstenedione. Has 16-alpha hydroxylase activity. Catalyzes 16-alpha hydroxylation of 17-alpha hydroxy pregnenolone, followed by the cleavage of the C17-C20 bond to form 16-alpha-hydroxy DHEA. Also 16-alpha hydroxylates androgens, relevant for estriol synthesis. Mechanistically, uses molecular oxygen inserting one oxygen atom into a substrate, and reducing the second into a water molecule, with two electrons provided by NADPH via cytochrome P450 reductase (CPR; NADPH-ferrihemoprotein reductase). The protein is Steroid 17-alpha-hydroxylase/17,20 lyase (CYP17A1) of Equus caballus (Horse).